We begin with the raw amino-acid sequence, 495 residues long: Lysine--tRNA ligase (495 aa).

E406 and E413 together coordinate Mg(2+).

The protein belongs to the class-II aminoacyl-tRNA synthetase family. Homodimer. Mg(2+) serves as cofactor.

Its subcellular location is the cytoplasm. The catalysed reaction is tRNA(Lys) + L-lysine + ATP = L-lysyl-tRNA(Lys) + AMP + diphosphate. The protein is Lysine--tRNA ligase of Staphylococcus aureus (strain MRSA252).